A 525-amino-acid chain; its full sequence is GMP synthase [glutamine-hydrolyzing] (525 aa).

Residues 9-207 (RILILDFGSQ…VRDICQCEAL (199 aa)) form the Glutamine amidotransferase type-1 domain. Cys-86 acts as the Nucleophile in catalysis. Residues His-181 and Glu-183 contribute to the active site. The 193-residue stretch at 208–400 (WTPAKIIDDA…LGLPYDMLYR (193 aa)) folds into the GMPS ATP-PPase domain. 235–241 (SGGVDSS) is an ATP binding site.

Homodimer.

The enzyme catalyses XMP + L-glutamine + ATP + H2O = GMP + L-glutamate + AMP + diphosphate + 2 H(+). The protein operates within purine metabolism; GMP biosynthesis; GMP from XMP (L-Gln route): step 1/1. Functionally, catalyzes the synthesis of GMP from XMP. This chain is GMP synthase [glutamine-hydrolyzing], found in Salmonella typhi.